Reading from the N-terminus, the 370-residue chain is UDP-galactose transporter homolog 1 (370 aa).

10 helical membrane passes run Ala-22–Leu-42, Ile-62–Val-82, Cys-115–Gly-135, Leu-145–Phe-165, Tyr-175–Thr-195, Thr-204–Thr-224, Leu-242–His-262, Leu-280–Ile-300, Ile-307–Leu-327, and Ser-333–Ile-353.

Belongs to the nucleotide-sugar transporter family. SLC35B subfamily.

It is found in the endoplasmic reticulum membrane. May be involved in specific transport of UDP-Gal from the cytosol to the Golgi lumen. Involved in the maintenance of optimal conditions for the folding of secretory pathway proteins in the endoplasmic reticulum. The sequence is that of UDP-galactose transporter homolog 1 (HUT1) from Candida albicans (strain SC5314 / ATCC MYA-2876) (Yeast).